We begin with the raw amino-acid sequence, 247 residues long: tRNA (guanine-N(1)-)-methyltransferase (247 aa).

S-adenosyl-L-methionine-binding positions include glycine 115 and 134 to 139; that span reads IGDFVL.

Belongs to the RNA methyltransferase TrmD family. As to quaternary structure, homodimer.

It localises to the cytoplasm. The catalysed reaction is guanosine(37) in tRNA + S-adenosyl-L-methionine = N(1)-methylguanosine(37) in tRNA + S-adenosyl-L-homocysteine + H(+). Its function is as follows. Specifically methylates guanosine-37 in various tRNAs. The polypeptide is tRNA (guanine-N(1)-)-methyltransferase (Anaeromyxobacter dehalogenans (strain 2CP-C)).